Reading from the N-terminus, the 386-residue chain is Succinate--CoA ligase [ADP-forming] subunit beta (386 aa).

Residues 9–244 (KELLREFGVA…TTEEDPREVE (236 aa)) enclose the ATP-grasp domain. ATP contacts are provided by residues Lys-46, 53-55 (GRG), Glu-99, Ser-102, and Glu-107. Mg(2+) contacts are provided by Asn-199 and Asp-213. Residues Asn-264 and 321 to 323 (GIM) contribute to the substrate site.

Belongs to the succinate/malate CoA ligase beta subunit family. As to quaternary structure, heterotetramer of two alpha and two beta subunits. It depends on Mg(2+) as a cofactor.

The catalysed reaction is succinate + ATP + CoA = succinyl-CoA + ADP + phosphate. The enzyme catalyses GTP + succinate + CoA = succinyl-CoA + GDP + phosphate. It participates in carbohydrate metabolism; tricarboxylic acid cycle; succinate from succinyl-CoA (ligase route): step 1/1. Succinyl-CoA synthetase functions in the citric acid cycle (TCA), coupling the hydrolysis of succinyl-CoA to the synthesis of either ATP or GTP and thus represents the only step of substrate-level phosphorylation in the TCA. The beta subunit provides nucleotide specificity of the enzyme and binds the substrate succinate, while the binding sites for coenzyme A and phosphate are found in the alpha subunit. The chain is Succinate--CoA ligase [ADP-forming] subunit beta from Exiguobacterium sp. (strain ATCC BAA-1283 / AT1b).